The sequence spans 199 residues: dITP/XTP pyrophosphatase (199 aa).

7-12 (TGNAGK) lines the substrate pocket. Residues Glu-37 and Asp-66 each coordinate Mg(2+). Asp-66 serves as the catalytic Proton acceptor. Residues Ser-67, 146 to 149 (FGYD), Lys-169, and 174 to 175 (HR) contribute to the substrate site.

This sequence belongs to the HAM1 NTPase family. In terms of assembly, homodimer. Mg(2+) serves as cofactor.

It catalyses the reaction XTP + H2O = XMP + diphosphate + H(+). The catalysed reaction is dITP + H2O = dIMP + diphosphate + H(+). The enzyme catalyses ITP + H2O = IMP + diphosphate + H(+). Functionally, pyrophosphatase that catalyzes the hydrolysis of nucleoside triphosphates to their monophosphate derivatives, with a high preference for the non-canonical purine nucleotides XTP (xanthosine triphosphate), dITP (deoxyinosine triphosphate) and ITP. Seems to function as a house-cleaning enzyme that removes non-canonical purine nucleotides from the nucleotide pool, thus preventing their incorporation into DNA/RNA and avoiding chromosomal lesions. This Deinococcus geothermalis (strain DSM 11300 / CIP 105573 / AG-3a) protein is dITP/XTP pyrophosphatase.